Consider the following 527-residue polypeptide: ATP synthase subunit alpha (527 aa).

ATP is bound at residue 172 to 179 (GDRQTGKT).

It belongs to the ATPase alpha/beta chains family. As to quaternary structure, F-type ATPases have 2 components, CF(1) - the catalytic core - and CF(0) - the membrane proton channel. CF(1) has five subunits: alpha(3), beta(3), gamma(1), delta(1), epsilon(1). CF(0) has three main subunits: a(1), b(2) and c(9-12). The alpha and beta chains form an alternating ring which encloses part of the gamma chain. CF(1) is attached to CF(0) by a central stalk formed by the gamma and epsilon chains, while a peripheral stalk is formed by the delta and b chains.

The protein resides in the cell inner membrane. The catalysed reaction is ATP + H2O + 4 H(+)(in) = ADP + phosphate + 5 H(+)(out). Produces ATP from ADP in the presence of a proton gradient across the membrane. The alpha chain is a regulatory subunit. In Bacteroides thetaiotaomicron (strain ATCC 29148 / DSM 2079 / JCM 5827 / CCUG 10774 / NCTC 10582 / VPI-5482 / E50), this protein is ATP synthase subunit alpha.